We begin with the raw amino-acid sequence, 423 residues long: Transcription factor bHLH14 (423 aa).

The tract at residues 192–243 (GKTTKHTNQTGSYPKPAVSDHSKSGNQQFGSERKRRRKLETTRVAAATKEKH) is disordered. The bHLH domain occupies 245 to 294 (PAVLSHVEAEKQRREKLNHRFYALRAIVPKVSRMDKASLLSDAVSYIESL). The segment at 312–343 (ETDKLDNSSSNTSPSSVEYQVNQKPSKSNRGS) is disordered. The span at 318–327 (NSSSNTSPSS) shows a compositional bias: low complexity. Residues 328-342 (VEYQVNQKPSKSNRG) show a composition bias toward polar residues.

In terms of assembly, homodimer.

The protein resides in the nucleus. This chain is Transcription factor bHLH14 (BHLH14), found in Arabidopsis thaliana (Mouse-ear cress).